A 446-amino-acid polypeptide reads, in one-letter code: Tubulin alpha-2 chain (446 aa).

Positions methionine 1–cysteine 4 match the MREC motif motif. Residues glutamine 11, glutamate 68, serine 137, glycine 141, threonine 142, serine 176, asparagine 203, and asparagine 225 each contribute to the GTP site. Glutamate 68 lines the Mg(2+) pocket. Residue glutamate 251 is part of the active site.

This sequence belongs to the tubulin family. As to quaternary structure, dimer of alpha and beta chains. A typical microtubule is a hollow water-filled tube with an outer diameter of 25 nm and an inner diameter of 15 nM. Alpha-beta heterodimers associate head-to-tail to form protofilaments running lengthwise along the microtubule wall with the beta-tubulin subunit facing the microtubule plus end conferring a structural polarity. Microtubules usually have 13 protofilaments but different protofilament numbers can be found in some organisms and specialized cells. Mg(2+) is required as a cofactor. In terms of processing, some glutamate residues at the C-terminus are polyglycylated, resulting in polyglycine chains on the gamma-carboxyl group. Glycylation is mainly limited to tubulin incorporated into axonemes (cilia and flagella) whereas glutamylation is prevalent in neuronal cells, centrioles, axonemes, and the mitotic spindle. Both modifications can coexist on the same protein on adjacent residues, and lowering polyglycylation levels increases polyglutamylation, and reciprocally. The precise function of polyglycylation is still unclear. Some glutamate residues at the C-terminus are polyglutamylated, resulting in polyglutamate chains on the gamma-carboxyl group. Polyglutamylation plays a key role in microtubule severing by spastin (SPAST). SPAST preferentially recognizes and acts on microtubules decorated with short polyglutamate tails: severing activity by SPAST increases as the number of glutamates per tubulin rises from one to eight, but decreases beyond this glutamylation threshold. In terms of tissue distribution, testis specific.

Its subcellular location is the cytoplasm. The protein resides in the cytoskeleton. The catalysed reaction is GTP + H2O = GDP + phosphate + H(+). Its function is as follows. Tubulin is the major constituent of microtubules, a cylinder consisting of laterally associated linear protofilaments composed of alpha- and beta-tubulin heterodimers. Microtubules grow by the addition of GTP-tubulin dimers to the microtubule end, where a stabilizing cap forms. Below the cap, tubulin dimers are in GDP-bound state, owing to GTPase activity of alpha-tubulin. The polypeptide is Tubulin alpha-2 chain (Gallus gallus (Chicken)).